Reading from the N-terminus, the 503-residue chain is MEFSVKSGSPEKQRSACIVVGVFEPRRLSPIAEQLDKISDGYISALLRRGELEGKPGQTLLLHHVPNILSERILLIGCGKERELDERQYKQVIQKTINTLNDTGSMEAVCFLTELHVKGRNNYWKVRQAVETAKETLYSFDQLKTNKSEPRRPLRKMVFNVPTRRELTSGERAIQHGLAIAAGIKAAKDLGNMPPNICNAAYLASQARQLADTYSKNVITRVIGEQQMRELGMNAYLAVGNGSQNESLMSVIEYKGNPAEDARPIVLVGKGLTFDSGGISIKPAEGMDEMKYDMCGAAAVYGVMRMVAELQLPLNVIGVLAGCENMPGGRAYRPGDVLTTMSGQTVEVLNTDAEGRLVLCDVLTYVERFEPEAVIDVATLTGACVIALGHHITGLMSNHNPLAHELIGASELAGDRAWRLPLADEFQDQLESNFADMANIGGRPGGAITAGCFLSRFTRKYNWAHLDIAGTAWRSGKAKGATGRPVALLSQFLLNRAGFNGEE.

Positions 270 and 275 each coordinate Mn(2+). The active site involves K282. D293, D352, and E354 together coordinate Mn(2+). R356 is an active-site residue.

This sequence belongs to the peptidase M17 family. Mn(2+) is required as a cofactor.

Its subcellular location is the cytoplasm. The enzyme catalyses Release of an N-terminal amino acid, Xaa-|-Yaa-, in which Xaa is preferably Leu, but may be other amino acids including Pro although not Arg or Lys, and Yaa may be Pro. Amino acid amides and methyl esters are also readily hydrolyzed, but rates on arylamides are exceedingly low.. The catalysed reaction is Release of an N-terminal amino acid, preferentially leucine, but not glutamic or aspartic acids.. Presumably involved in the processing and regular turnover of intracellular proteins. Catalyzes the removal of unsubstituted N-terminal amino acids from various peptides. The polypeptide is Probable cytosol aminopeptidase (Klebsiella pneumoniae subsp. pneumoniae (strain ATCC 700721 / MGH 78578)).